Here is a 209-residue protein sequence, read N- to C-terminus: Kynurenine formamidase (209 aa).

Substrate is bound at residue W18. The Zn(2+) site is built by H48, H52, and D54. The Proton donor/acceptor role is filled by H58. The Zn(2+) site is built by H160 and E172.

Belongs to the Cyclase 1 superfamily. KynB family. In terms of assembly, homodimer. Zn(2+) serves as cofactor.

The catalysed reaction is N-formyl-L-kynurenine + H2O = L-kynurenine + formate + H(+). Its pathway is amino-acid degradation; L-tryptophan degradation via kynurenine pathway; L-kynurenine from L-tryptophan: step 2/2. Catalyzes the hydrolysis of N-formyl-L-kynurenine to L-kynurenine, the second step in the kynurenine pathway of tryptophan degradation. This chain is Kynurenine formamidase, found in Sphingopyxis alaskensis (strain DSM 13593 / LMG 18877 / RB2256) (Sphingomonas alaskensis).